Reading from the N-terminus, the 365-residue chain is tRNA/tmRNA (uracil-C(5))-methyltransferase (365 aa).

5 residues coordinate S-adenosyl-L-methionine: Gln189, Tyr217, Asn222, Glu238, and Asp298. Catalysis depends on Cys323, which acts as the Nucleophile. The active-site Proton acceptor is Glu357.

The protein belongs to the class I-like SAM-binding methyltransferase superfamily. RNA M5U methyltransferase family. TrmA subfamily.

It carries out the reaction uridine(54) in tRNA + S-adenosyl-L-methionine = 5-methyluridine(54) in tRNA + S-adenosyl-L-homocysteine + H(+). It catalyses the reaction uridine(341) in tmRNA + S-adenosyl-L-methionine = 5-methyluridine(341) in tmRNA + S-adenosyl-L-homocysteine + H(+). Functionally, dual-specificity methyltransferase that catalyzes the formation of 5-methyluridine at position 54 (m5U54) in all tRNAs, and that of position 341 (m5U341) in tmRNA (transfer-mRNA). This chain is tRNA/tmRNA (uracil-C(5))-methyltransferase, found in Shewanella amazonensis (strain ATCC BAA-1098 / SB2B).